The primary structure comprises 393 residues: Ceramide synthase 4 (393 aa).

The Lumenal portion of the chain corresponds to 1–31 (MSFSLSEWLWQETYWLPPNVTWAELEDRDGL). A glycan (N-linked (GlcNAc...) asparagine) is linked at N19. Residues 32 to 52 (VFAHPHHVLAAFPVALVLVAV) traverse the membrane as a helical segment. Residues 67–128 (WMGVQDPIRR…RRRRNQDRPS (62 aa)) are homeobox-like. Residues 131 to 332 (KKFCEACWRF…ILRMLYSFLH (202 aa)) form the TLC domain. A run of 4 helical transmembrane segments spans residues 140 to 160 (FVFY…ESWL), 179 to 199 (LYWW…TLPF), 217 to 237 (VGLI…VVLL), and 265 to 285 (FIMF…TQVI). The short motif at 291–301 (DSIKNSGPFFG) is the Last loop motif element. The chain crosses the membrane as a helical span at residues 304-324 (FFIVLLVMLQILHVYWFCLIL). Residues 325–393 (RMLYSFLHKG…CLTNGHTRAT (69 aa)) lie on the Cytoplasmic side of the membrane. The tract at residues 341 to 393 (RSDVEEPDSSDDEPVSEGPQLKNGMARGSRVAVTNGPRSRAAACLTNGHTRAT) is disordered. 3 positions are modified to phosphoserine: S342, S349, and S350. The span at 345–355 (EEPDSSDDEPV) shows a compositional bias: acidic residues.

In terms of processing, phosphorylated at the C-terminus by CK2. Ubiquitously expressed, with highest levels in skin.

The protein localises to the endoplasmic reticulum membrane. It carries out the reaction sphinganine + octadecanoyl-CoA = N-(octadecanoyl)-sphinganine + CoA + H(+). The catalysed reaction is eicosanoyl-CoA + sphinganine = N-eicosanoylsphinganine + CoA + H(+). It catalyses the reaction docosanoyl-CoA + sphinganine = N-docosanoylsphinganine + CoA + H(+). The enzyme catalyses tetracosanoyl-CoA + sphinganine = N-tetracosanoylsphinganine + CoA + H(+). It carries out the reaction hexacosanoyl-CoA + sphinganine = N-hexacosanoylsphinganine + CoA + H(+). The catalysed reaction is a fatty acyl-CoA + sphing-4-enine = an N-acylsphing-4-enine + CoA + H(+). It catalyses the reaction sphing-4-enine + octadecanoyl-CoA = N-octadecanoylsphing-4-enine + CoA + H(+). The enzyme catalyses hexadecasphinganine + octadecanoyl-CoA = N-octadecanoylhexadecasphinganine + CoA + H(+). It functions in the pathway lipid metabolism; sphingolipid metabolism. Ceramide synthase that catalyzes formation of ceramide from sphinganine and acyl-CoA substrates, with high selectivity toward long and very-long chains (C18:0-C22:0) as acyl donor. This chain is Ceramide synthase 4, found in Mus musculus (Mouse).